A 302-amino-acid polypeptide reads, in one-letter code: Phosphoribosylaminoimidazole-succinocarboxamide synthase (302 aa).

Belongs to the SAICAR synthetase family.

It catalyses the reaction 5-amino-1-(5-phospho-D-ribosyl)imidazole-4-carboxylate + L-aspartate + ATP = (2S)-2-[5-amino-1-(5-phospho-beta-D-ribosyl)imidazole-4-carboxamido]succinate + ADP + phosphate + 2 H(+). It functions in the pathway purine metabolism; IMP biosynthesis via de novo pathway; 5-amino-1-(5-phospho-D-ribosyl)imidazole-4-carboxamide from 5-amino-1-(5-phospho-D-ribosyl)imidazole-4-carboxylate: step 1/2. This Cupriavidus pinatubonensis (strain JMP 134 / LMG 1197) (Cupriavidus necator (strain JMP 134)) protein is Phosphoribosylaminoimidazole-succinocarboxamide synthase.